A 380-amino-acid polypeptide reads, in one-letter code: Alcohol dehydrogenase 1 (380 aa).

Zn(2+) contacts are provided by Cys-48, Thr-50, His-70, Cys-100, Cys-103, Cys-106, Cys-114, and Cys-178. Residues Thr-50 and His-70 each coordinate an alcohol. Thr-50 serves as a coordination point for NAD(+). NAD(+)-binding positions include Gly-203 to Gly-208, Asp-227, Arg-232, Thr-273, Val-296, Val-296 to Val-298, Phe-323, and Arg-373.

It belongs to the zinc-containing alcohol dehydrogenase family. In terms of assembly, homodimer. Homotetramer. Zn(2+) serves as cofactor.

It localises to the cytoplasm. The catalysed reaction is a primary alcohol + NAD(+) = an aldehyde + NADH + H(+). The enzyme catalyses a secondary alcohol + NAD(+) = a ketone + NADH + H(+). This chain is Alcohol dehydrogenase 1 (ADH1), found in Solanum tuberosum (Potato).